A 601-amino-acid polypeptide reads, in one-letter code: NADH-quinone oxidoreductase subunit C/D (601 aa).

An NADH dehydrogenase I subunit C region spans residues 1 to 191 (MKLTRDFPHN…DPFMLDAAKQ (191 aa)). The NADH dehydrogenase I subunit D stretch occupies residues 215 to 601 (DYMFLNLGPN…IDFVMSDVDR (387 aa)).

This sequence in the N-terminal section; belongs to the complex I 30 kDa subunit family. It in the C-terminal section; belongs to the complex I 49 kDa subunit family. NDH-1 is composed of 13 different subunits. Subunits NuoB, CD, E, F, and G constitute the peripheral sector of the complex.

The protein resides in the cell inner membrane. The enzyme catalyses a quinone + NADH + 5 H(+)(in) = a quinol + NAD(+) + 4 H(+)(out). Its function is as follows. NDH-1 shuttles electrons from NADH, via FMN and iron-sulfur (Fe-S) centers, to quinones in the respiratory chain. The immediate electron acceptor for the enzyme in this species is believed to be ubiquinone. Couples the redox reaction to proton translocation (for every two electrons transferred, four hydrogen ions are translocated across the cytoplasmic membrane), and thus conserves the redox energy in a proton gradient. The chain is NADH-quinone oxidoreductase subunit C/D from Shewanella oneidensis (strain ATCC 700550 / JCM 31522 / CIP 106686 / LMG 19005 / NCIMB 14063 / MR-1).